We begin with the raw amino-acid sequence, 267 residues long: Undecaprenyl-diphosphatase (267 aa).

A run of 8 helical transmembrane segments spans residues 1-21 (MSYFEAFMLALVQGFTEFLPI), 39-59 (QGLAFDVAVHVGTLAAVVIYF), 83-103 (AKLAWMIILATIPACIFGLLM), 111-131 (LRSAWVIATTTIIFGLLLWWV), 144-164 (AGWKKALFIGLAQAMAIIPGT), 189-209 (FLMSIPIITLAGGYLGLKLVT), 218-238 (TLLTGIVVSFISAYICIHFFL), and 246-266 (MTPFVIYRLILGFGLFAFLMM).

The protein belongs to the UppP family.

It is found in the cell inner membrane. It carries out the reaction di-trans,octa-cis-undecaprenyl diphosphate + H2O = di-trans,octa-cis-undecaprenyl phosphate + phosphate + H(+). In terms of biological role, catalyzes the dephosphorylation of undecaprenyl diphosphate (UPP). Confers resistance to bacitracin. In Vibrio atlanticus (strain LGP32) (Vibrio splendidus (strain Mel32)), this protein is Undecaprenyl-diphosphatase.